The sequence spans 89 residues: Large ribosomal subunit protein bL27 (89 aa).

Positions 1–22 (MAHKKAGGSSRNGRDSAGRRLG) are disordered.

This sequence belongs to the bacterial ribosomal protein bL27 family.

The protein is Large ribosomal subunit protein bL27 of Sphingopyxis alaskensis (strain DSM 13593 / LMG 18877 / RB2256) (Sphingomonas alaskensis).